A 354-amino-acid polypeptide reads, in one-letter code: Protein-arginine kinase (354 aa).

One can recognise a Phosphagen kinase C-terminal domain in the interval 24–254 (IVLSSRIRLA…QQIIQQEKMA (231 aa)). ATP is bound by residues 27–31 (SSRIR), H92, R125, 176–180 (RASVM), and 207–212 (RGIYGE). The RDXXRA motif of the pArg binding pocket involved in allosteric regulation signature appears at 337–342 (RDYRRA).

This sequence belongs to the ATP:guanido phosphotransferase family.

The enzyme catalyses L-arginyl-[protein] + ATP = N(omega)-phospho-L-arginyl-[protein] + ADP + H(+). Its activity is regulated as follows. Appears to be allosterically activated by the binding of pArg-containing polypeptides to the pArg-binding pocket localized in the C-terminal domain of McsB. Its function is as follows. Catalyzes the specific phosphorylation of arginine residues in a large number of proteins. Is part of the bacterial stress response system. Protein arginine phosphorylation has a physiologically important role and is involved in the regulation of many critical cellular processes, such as protein homeostasis, motility, competence, and stringent and stress responses, by regulating gene expression and protein activity. This chain is Protein-arginine kinase, found in Bacillus cereus (strain ATCC 10987 / NRS 248).